The sequence spans 77 residues: Exodeoxyribonuclease 7 small subunit (77 aa).

This sequence belongs to the XseB family. In terms of assembly, heterooligomer composed of large and small subunits.

Its subcellular location is the cytoplasm. The enzyme catalyses Exonucleolytic cleavage in either 5'- to 3'- or 3'- to 5'-direction to yield nucleoside 5'-phosphates.. Its function is as follows. Bidirectionally degrades single-stranded DNA into large acid-insoluble oligonucleotides, which are then degraded further into small acid-soluble oligonucleotides. The protein is Exodeoxyribonuclease 7 small subunit of Trichlorobacter lovleyi (strain ATCC BAA-1151 / DSM 17278 / SZ) (Geobacter lovleyi).